The primary structure comprises 499 residues: Probable cytosol aminopeptidase (499 aa).

Mn(2+) contacts are provided by Lys-263 and Asp-268. Residue Lys-275 is part of the active site. Positions 286, 345, and 347 each coordinate Mn(2+). The active site involves Arg-349.

Belongs to the peptidase M17 family. The cofactor is Mn(2+).

The protein resides in the cytoplasm. It carries out the reaction Release of an N-terminal amino acid, Xaa-|-Yaa-, in which Xaa is preferably Leu, but may be other amino acids including Pro although not Arg or Lys, and Yaa may be Pro. Amino acid amides and methyl esters are also readily hydrolyzed, but rates on arylamides are exceedingly low.. It catalyses the reaction Release of an N-terminal amino acid, preferentially leucine, but not glutamic or aspartic acids.. Presumably involved in the processing and regular turnover of intracellular proteins. Catalyzes the removal of unsubstituted N-terminal amino acids from various peptides. The protein is Probable cytosol aminopeptidase of Chlamydia trachomatis serovar L2 (strain ATCC VR-902B / DSM 19102 / 434/Bu).